The chain runs to 377 residues: tRNA-splicing endonuclease subunit SEN2 (377 aa).

The stretch at 119–174 (ETEMTLEKVTQQRRLQRLEFKKERAKLERELLELRKKGGHIDEENILLEKQRESLR) forms a coiled coil. Active-site residues include Tyr289, His297, and Lys328.

Belongs to the tRNA-intron endonuclease family. In terms of assembly, heterotetramer composed of SEN2, SEN15, SEN34 and SEN54. Interacts directly with SEN54.

It is found in the nucleus. The protein localises to the endomembrane system. The protein resides in the mitochondrion outer membrane. The catalysed reaction is pretRNA = a 3'-half-tRNA molecule with a 5'-OH end + a 5'-half-tRNA molecule with a 2',3'-cyclic phosphate end + an intron with a 2',3'-cyclic phosphate and a 5'-hydroxyl terminus.. Functionally, constitutes one of the two catalytic subunit of the tRNA-splicing endonuclease complex, a complex responsible for identification and cleavage of the splice sites in pre-tRNA. It cleaves pre-tRNA at the 5'- and 3'-splice sites to release the intron. The products are an intron and two tRNA half-molecules bearing 2',3'-cyclic phosphate and 5'-OH termini. There are no conserved sequences at the splice sites, but the intron is invariably located at the same site in the gene, placing the splice sites an invariant distance from the constant structural features of the tRNA body. This subunit may anchor the endonuclease complex to the nuclear membrane. Probably carries the active site for 5'-splice site cleavage. In Saccharomyces cerevisiae (strain ATCC 204508 / S288c) (Baker's yeast), this protein is tRNA-splicing endonuclease subunit SEN2 (SEN2).